The chain runs to 123 residues: SOSS complex subunit C homolog (123 aa).

It belongs to the SOSS-C family.

In Drosophila ananassae (Fruit fly), this protein is SOSS complex subunit C homolog.